Consider the following 92-residue polypeptide: Probable Fe(2+)-trafficking protein (92 aa).

Belongs to the Fe(2+)-trafficking protein family.

Its function is as follows. Could be a mediator in iron transactions between iron acquisition and iron-requiring processes, such as synthesis and/or repair of Fe-S clusters in biosynthetic enzymes. In Shewanella woodyi (strain ATCC 51908 / MS32), this protein is Probable Fe(2+)-trafficking protein.